Here is a 366-residue protein sequence, read N- to C-terminus: tRNA/tmRNA (uracil-C(5))-methyltransferase (366 aa).

Positions 190, 218, 223, 239, and 299 each coordinate S-adenosyl-L-methionine. C324 serves as the catalytic Nucleophile. E358 serves as the catalytic Proton acceptor.

This sequence belongs to the class I-like SAM-binding methyltransferase superfamily. RNA M5U methyltransferase family. TrmA subfamily.

The enzyme catalyses uridine(54) in tRNA + S-adenosyl-L-methionine = 5-methyluridine(54) in tRNA + S-adenosyl-L-homocysteine + H(+). It carries out the reaction uridine(341) in tmRNA + S-adenosyl-L-methionine = 5-methyluridine(341) in tmRNA + S-adenosyl-L-homocysteine + H(+). Functionally, dual-specificity methyltransferase that catalyzes the formation of 5-methyluridine at position 54 (m5U54) in all tRNAs, and that of position 341 (m5U341) in tmRNA (transfer-mRNA). The protein is tRNA/tmRNA (uracil-C(5))-methyltransferase of Salmonella choleraesuis (strain SC-B67).